Reading from the N-terminus, the 833-residue chain is MTPLFDLEEPPKRVLLVDGHHLAYRTFYALSLTTSRGEPVQMVYGFARSLLKALKEDGQAVVVVFDAKAPSFRHEAYEAYKAGRAPTPEDFPRQLALVKRLVDLLGLVRLEAPGYEADDVLGTLAKKAEREGMEVRILTGDRDFFQLLSEKVSVLLPDGTLVTPKDVQEKYGVPPERWVDFRALTGDRSDNIPGVAGIGEKTALRLLAEWGSVENLLKNLDRVKPDSLRRKIEAHLEDLHLSLDLARIRTDLPLEVDFKALRRRTPDLEGLRAFLEELEFGSLLHEFGLLGGEKPREEAPWPPPEGAFVGFLLSRKEPMWAELLALAAASEGRVHRATSPVEALADLKEARGFLAKDLAVLALREGVALDPTDDPLLVAYLLDPANTHPEGVARRYGGEFTEDAAERALLSERLFQNLFPRLSEKLLWLYQEVERPLSRVLAHMEARGVRLDVPLLEALSFELEKEMERLEGEVFRLAGHPFNLNSRDQLERVLFDELGLTPVGRTEKTGKRSTAQGALEALRGAHPIVELILQYRELSKLKSTYLDPLPRLVHPRTGRLHTRFNQTATATGRLSSSDPNLQNIPVRTPLGQRIRKAFVAEEGWLLLAADYSQIELRVLAHLSGDENLKRVFREGKDIHTETAAWMFGLDPALVDPKMRRAAKTVNFGVLYGMSAHRLSQELGIDYKEAEAFIERYFQSFPKVRAWIERTLEEGRTRGYVETLFGRRRYVPDLASRVRSVREAAERMAFNMPVQGTAADLMKIAMVKLFPRLKPLGAHLLLQVHDELVLEVPEDRAEEAKALVKEVMENAYPLDVPLEVEVGVGRDWLEAKQD.

One can recognise a 5'-3' exonuclease domain in the interval 173 to 267; that stretch reads VPPERWVDFR…FKALRRRTPD (95 aa). A polymerase region spans residues 412 to 833; that stretch reads ERLFQNLFPR…GRDWLEAKQD (422 aa).

It belongs to the DNA polymerase type-A family.

It catalyses the reaction DNA(n) + a 2'-deoxyribonucleoside 5'-triphosphate = DNA(n+1) + diphosphate. Functionally, in addition to polymerase activity, this DNA polymerase exhibits 5'-3' exonuclease activity. Unlikely to have 3'-5' exonuclease activity due to absence of a 3'-5' exonuclease domain. The sequence is that of DNA polymerase I, thermostable (polA) from Thermus filiformis.